We begin with the raw amino-acid sequence, 388 residues long: Succinate--CoA ligase [ADP-forming] subunit beta (388 aa).

The ATP-grasp domain occupies 9–244 (KQIFAEYQLP…PSQEDPREAL (236 aa)). ATP is bound by residues K46, 53–55 (GRG), E99, S102, and E107. Mg(2+) contacts are provided by N199 and D213. Substrate contacts are provided by residues N264 and 321 to 323 (GIV).

The protein belongs to the succinate/malate CoA ligase beta subunit family. Heterotetramer of two alpha and two beta subunits. It depends on Mg(2+) as a cofactor.

It catalyses the reaction succinate + ATP + CoA = succinyl-CoA + ADP + phosphate. The catalysed reaction is GTP + succinate + CoA = succinyl-CoA + GDP + phosphate. It participates in carbohydrate metabolism; tricarboxylic acid cycle; succinate from succinyl-CoA (ligase route): step 1/1. Its function is as follows. Succinyl-CoA synthetase functions in the citric acid cycle (TCA), coupling the hydrolysis of succinyl-CoA to the synthesis of either ATP or GTP and thus represents the only step of substrate-level phosphorylation in the TCA. The beta subunit provides nucleotide specificity of the enzyme and binds the substrate succinate, while the binding sites for coenzyme A and phosphate are found in the alpha subunit. The protein is Succinate--CoA ligase [ADP-forming] subunit beta of Pasteurella multocida (strain Pm70).